We begin with the raw amino-acid sequence, 170 residues long: Urease accessory protein UreE (170 aa).

The protein belongs to the UreE family.

It localises to the cytoplasm. Functionally, involved in urease metallocenter assembly. Binds nickel. Probably functions as a nickel donor during metallocenter assembly. This Helicobacter pylori (strain J99 / ATCC 700824) (Campylobacter pylori J99) protein is Urease accessory protein UreE.